We begin with the raw amino-acid sequence, 93 residues long: Small ribosomal subunit protein uS19 (93 aa).

This sequence belongs to the universal ribosomal protein uS19 family.

Its function is as follows. Protein S19 forms a complex with S13 that binds strongly to the 16S ribosomal RNA. The polypeptide is Small ribosomal subunit protein uS19 (Nitratidesulfovibrio vulgaris (strain DSM 19637 / Miyazaki F) (Desulfovibrio vulgaris)).